The primary structure comprises 316 residues: Large ribosomal subunit protein uL10 (316 aa).

The disordered stretch occupies residues 282-316 (ASAAKADEPKKEEAKKVEEEEEEEEDGFMGFGMFD). A compositionally biased stretch (basic and acidic residues) spans 286–299 (KADEPKKEEAKKVE).

The protein belongs to the universal ribosomal protein uL10 family. In terms of assembly, P0 forms a pentameric complex by interaction with dimers of P1 and P2. Phosphorylated.

In terms of biological role, ribosomal protein P0 is the functional equivalent of E.coli protein L10. This chain is Large ribosomal subunit protein uL10 (RPLP0), found in Plasmodium falciparum (isolate 7G8).